We begin with the raw amino-acid sequence, 244 residues long: tRNA (guanine-N(7)-)-methyltransferase (244 aa).

S-adenosyl-L-methionine contacts are provided by glutamate 42, aspartate 67, aspartate 94, and aspartate 116. Aspartate 116 is an active-site residue. Residues lysine 120, aspartate 150, and 191–194 contribute to the substrate site; that span reads TYYE.

It belongs to the class I-like SAM-binding methyltransferase superfamily. TrmB family.

The catalysed reaction is guanosine(46) in tRNA + S-adenosyl-L-methionine = N(7)-methylguanosine(46) in tRNA + S-adenosyl-L-homocysteine. Its pathway is tRNA modification; N(7)-methylguanine-tRNA biosynthesis. In terms of biological role, catalyzes the formation of N(7)-methylguanine at position 46 (m7G46) in tRNA. The polypeptide is tRNA (guanine-N(7)-)-methyltransferase (Porphyromonas gingivalis (strain ATCC BAA-308 / W83)).